The chain runs to 902 residues: Cytosolic 10-formyltetrahydrofolate dehydrogenase (902 aa).

A hydrolase domain region spans residues 1–310 (MKIAVIGQSL…LASNFFKGAA (310 aa)). S9 carries the phosphoserine modification. At K38 the chain carries N6-succinyllysine. 88 to 90 (QFI) is a binding site for (6R)-10-formyltetrahydrofolate. Residue H106 is the Proton donor of the active site. Residue D142 coordinates (6R)-10-formyltetrahydrofolate. Positions 318-395 (EAELVTAEAV…DFIQLLVRKL (78 aa)) constitute a Carrier domain. The residue at position 354 (S354) is an O-(pantetheine 4'-phosphoryl)serine. Residues 417–902 (TVRMPHQLFI…LRVKTVTFEY (486 aa)) form an aldehyde dehydrogenase domain region. NADP(+) contacts are provided by residues 571–573 (IPW) and 597–600 (KPAQ). S629 and S631 each carry phosphoserine. Residues 630 to 635 (GSLVGQ) and 650 to 651 (GS) each bind NADP(+). The residue at position 660 (K660) is an N6-succinyllysine. E673 serves as the catalytic Proton acceptor. 673 to 674 (EL) is a binding site for NADP(+). The active-site Proton donor is C707. Residue K757 coordinates NADP(+). Position 767 is an N6-succinyllysine (K767). Position 804–806 (804–806 (ESF)) interacts with NADP(+). S825 is subject to Phosphoserine. K882 bears the N6-acetyllysine mark.

In the N-terminal section; belongs to the GART family. It in the C-terminal section; belongs to the aldehyde dehydrogenase family. ALDH1L subfamily. In terms of assembly, homotetramer. Phosphopantetheinylation at Ser-354 by AASDHPPT is required for the formyltetrahydrofolate dehydrogenase activity. Highly expressed in liver, pancreas and kidney.

Its subcellular location is the cytoplasm. The protein resides in the cytosol. The enzyme catalyses (6R)-10-formyltetrahydrofolate + NADP(+) + H2O = (6S)-5,6,7,8-tetrahydrofolate + CO2 + NADPH + H(+). Its function is as follows. Cytosolic 10-formyltetrahydrofolate dehydrogenase that catalyzes the NADP(+)-dependent conversion of 10-formyltetrahydrofolate to tetrahydrofolate and carbon dioxide. May also have an NADP(+)-dependent aldehyde dehydrogenase activity towards formaldehyde, acetaldehyde, propionaldehyde, and benzaldehyde. This is Cytosolic 10-formyltetrahydrofolate dehydrogenase from Homo sapiens (Human).